The chain runs to 352 residues: MSERVNVAILGASGYTGAELVRLLARHPRVTLAALTANRKAGQAFASVFPHLGGLDLPVLSTIEAVDWSAIDFVFCALPHGTTQTIIGDLLNGPHGGRLRIADLSADFRLADPMVYQTWYGHAHEAVELQKEAVYGLTEINRAAIATARLVAVPGCYPTSAQLPLIPLLRAGLIDPDAIIIDAKSGASGAGRDAKEGSLHCEVSEGIHAYGVGTHRHGPEIEQGLSLAVGRPVAVTFTPHLMPMNRGILSTIYLRATAGNDATTLRQALSAAYADEAFVRVVPEGVSPHTRHVRGSNFVLIGVHADRVPGRVIVTCVEDNLVKGASGQAIQDMNVMLGFPETLGLDQQPLFP.

Residue C156 is part of the active site.

This sequence belongs to the NAGSA dehydrogenase family. Type 1 subfamily.

It localises to the cytoplasm. It catalyses the reaction N-acetyl-L-glutamate 5-semialdehyde + phosphate + NADP(+) = N-acetyl-L-glutamyl 5-phosphate + NADPH + H(+). It functions in the pathway amino-acid biosynthesis; L-arginine biosynthesis; N(2)-acetyl-L-ornithine from L-glutamate: step 3/4. Its function is as follows. Catalyzes the NADPH-dependent reduction of N-acetyl-5-glutamyl phosphate to yield N-acetyl-L-glutamate 5-semialdehyde. This chain is N-acetyl-gamma-glutamyl-phosphate reductase, found in Rhodospirillum rubrum (strain ATCC 11170 / ATH 1.1.1 / DSM 467 / LMG 4362 / NCIMB 8255 / S1).